Reading from the N-terminus, the 143-residue chain is Interleukin-4 (143 aa).

The signal sequence occupies residues 1–19 (MGLSPQLAAVLLCLLVCTG). 2 cysteine pairs are disulfide-bonded: cysteine 48/cysteine 88 and cysteine 70/cysteine 115. Residues asparagine 62 and asparagine 91 are each glycosylated (N-linked (GlcNAc...) asparagine).

This sequence belongs to the IL-4/IL-13 family.

The protein resides in the secreted. Its function is as follows. Participates in at least several B-cell activation processes as well as of other cell types. It is a costimulator of DNA-synthesis. It induces the expression of class II MHC molecules on resting B-cells. It enhances both secretion and cell surface expression of IgE and IgG1. It also regulates the expression of the low affinity Fc receptor for IgE (CD23) on both lymphocytes and monocytes. Positively regulates IL31RA expression in macrophages. Stimulates autophagy in dendritic cells by interfering with mTORC1 signaling and through the induction of RUFY4. This Meriones unguiculatus (Mongolian jird) protein is Interleukin-4 (IL4).